The sequence spans 93 residues: Small ribosomal subunit protein bS18 (93 aa).

Belongs to the bacterial ribosomal protein bS18 family. As to quaternary structure, part of the 30S ribosomal subunit. Forms a tight heterodimer with protein bS6.

Binds as a heterodimer with protein bS6 to the central domain of the 16S rRNA, where it helps stabilize the platform of the 30S subunit. This is Small ribosomal subunit protein bS18 from Verminephrobacter eiseniae (strain EF01-2).